We begin with the raw amino-acid sequence, 323 residues long: Aldo-keto reductase family 1 member C3 (323 aa).

NADP(+)-binding positions include 23-24 (TY) and Asp50. The active-site Proton donor is Tyr55. Residue His117 coordinates substrate. NADP(+) is bound by residues 166-167 (SN), Gln190, 216-222 (YSALGSQ), 270-272 (KSY), and 276-280 (RIRQN).

Belongs to the aldo/keto reductase family. As to expression, expressed in many tissues including adrenal gland, brain, kidney, liver, lung, mammary gland, placenta, small intestine, colon, spleen, prostate and testis. High expression in prostate and mammary gland. In the prostate, higher levels in epithelial cells than in stromal cells. In the brain, expressed in medulla, spinal cord, frontotemporal lobes, thalamus, subthalamic nuclei and amygdala. Weaker expression in the hippocampus, substantia nigra and caudate.

It is found in the cytoplasm. The catalysed reaction is a 3alpha-hydroxysteroid + NADP(+) = a 3-oxosteroid + NADPH + H(+). It carries out the reaction a 3alpha-hydroxysteroid + NAD(+) = a 3-oxosteroid + NADH + H(+). It catalyses the reaction prostaglandin F2alpha + NADP(+) = prostaglandin D2 + NADPH + H(+). The enzyme catalyses prostaglandin F2alpha + NADP(+) = prostaglandin H2 + NADPH + H(+). The catalysed reaction is prostaglandin D2 + NADPH + H(+) = 11beta-prostaglandin F2 + NADP(+). It carries out the reaction prostaglandin D2-ethanolamide + NADPH + H(+) = 11beta-prostaglandin F2-ethanolamide + NADP(+). It catalyses the reaction testosterone + NAD(+) = androst-4-ene-3,17-dione + NADH + H(+). The enzyme catalyses testosterone + NADP(+) = androst-4-ene-3,17-dione + NADPH + H(+). The catalysed reaction is 17beta-estradiol + NADP(+) = estrone + NADPH + H(+). It carries out the reaction 17beta-estradiol + NAD(+) = estrone + NADH + H(+). It catalyses the reaction (20S)-hydroxypregn-4-en-3-one + NADP(+) = progesterone + NADPH + H(+). The enzyme catalyses (20S)-hydroxypregn-4-en-3-one + NAD(+) = progesterone + NADH + H(+). The catalysed reaction is 5alpha-androstane-3alpha,17beta-diol + NADP(+) = 17beta-hydroxy-5alpha-androstan-3-one + NADPH + H(+). It carries out the reaction 5alpha-androstane-3alpha,17beta-diol + NAD(+) = 17beta-hydroxy-5alpha-androstan-3-one + NADH + H(+). It catalyses the reaction androsterone + NADPH + H(+) = 5alpha-androstane-3alpha,17beta-diol + NADP(+). The enzyme catalyses 5alpha-androstane-3alpha,17beta-diol + NAD(+) = androsterone + NADH + H(+). The catalysed reaction is 5alpha-androstane-3beta,17beta-diol + NADP(+) = 17beta-hydroxy-5alpha-androstan-3-one + NADPH + H(+). It carries out the reaction 9-cis-retinol + NADP(+) = 9-cis-retinal + NADPH + H(+). The protein operates within steroid metabolism. Strongly inhibited by nonsteroidal anti-inflammatory drugs (NSAID) including flufenamic acid and indomethacin. Also inhibited by the flavinoid, rutin, and by selective serotonin inhibitors (SSRIs). The oxidation reaction is inhibited by low micromolar concentrations of NADPH. Cytosolic aldo-keto reductase that catalyzes the NADH and NADPH-dependent reduction of ketosteroids to hydroxysteroids. Acts as a NAD(P)(H)-dependent 3-, 17- and 20-ketosteroid reductase on the steroid nucleus and side chain and regulates the metabolism of androgens, estrogens and progesterone. Displays the ability to catalyze both oxidation and reduction in vitro, but most probably acts as a reductase in vivo since the oxidase activity measured in vitro is inhibited by physiological concentration of NADPH. Acts preferentially as a 17-ketosteroid reductase and has the highest catalytic efficiency of the AKR1C enzyme for the reduction of delta4-androstenedione to form testosterone. Reduces prostaglandin (PG) D2 to 11beta-prostaglandin F2, progesterone to 20alpha-hydroxyprogesterone and estrone to 17beta-estradiol. Catalyzes the transformation of the potent androgen dihydrotestosterone (DHT) into the less active form, 5-alpha-androstan-3-alpha,17-beta-diol (3-alpha-diol). Also displays retinaldehyde reductase activity toward 9-cis-retinal. The chain is Aldo-keto reductase family 1 member C3 (AKR1C3) from Homo sapiens (Human).